Reading from the N-terminus, the 641-residue chain is ATP-dependent DNA helicase PIF1 (641 aa).

Residues 1-180 (MLSGIEAAAG…LVKRPVEPQA (180 aa)) form a PINT region. A phosphoserine mark is found at Ser-27 and Ser-151. The tract at residues 167–641 (PDTTLVKRPV…SDQENMDPIL (475 aa)) is hydrolyzes ATP in the presence of both magnesium and single-stranded DNA; weak activity in the presence of RNA or double-stranded DNA; No unwinding activity. A disordered region spans residues 173–192 (KRPVEPQAGAEPSTEAPRWP). 228 to 235 (GSAGTGKS) lines the ATP pocket. Residues 577–596 (QAYVALSRARSLQGLRVLDF) mediate DNA binding. The segment at 622 to 641 (LESPDDDEAASDQENMDPIL) is disordered. Residues 624 to 641 (SPDDDEAASDQENMDPIL) are compositionally biased toward acidic residues.

It belongs to the helicase family. PIF1 subfamily. As to quaternary structure, monomer. Interacts with telomerase. Mg(2+) is required as a cofactor. Weak ubiquitous expression.

The protein resides in the nucleus. It localises to the mitochondrion. The enzyme catalyses Couples ATP hydrolysis with the unwinding of duplex DNA at the replication fork by translocating in the 5'-3' direction. This creates two antiparallel DNA single strands (ssDNA). The leading ssDNA polymer is the template for DNA polymerase III holoenzyme which synthesizes a continuous strand.. It catalyses the reaction ATP + H2O = ADP + phosphate + H(+). DNA-dependent ATPase and 5'-3' DNA helicase required for the maintenance of both mitochondrial and nuclear genome stability. Efficiently unwinds G-quadruplex (G4) DNA structures and forked RNA-DNA hybrids. Resolves G4 structures, preventing replication pausing and double-strand breaks (DSBs) at G4 motifs. Involved in the maintenance of telomeric DNA. Inhibits telomere elongation, de novo telomere formation and telomere addition to DSBs via catalytic inhibition of telomerase. Reduces the processivity of telomerase by displacing active telomerase from DNA ends. Releases telomerase by unwinding the short telomerase RNA/telomeric DNA hybrid that is the intermediate in the telomerase reaction. Possesses an intrinsic strand annealing activity. This Homo sapiens (Human) protein is ATP-dependent DNA helicase PIF1.